A 189-amino-acid chain; its full sequence is Small ribosomal subunit protein uS5 (189 aa).

The region spanning 22–85 (FVDKLVAINR…ESAKRDLIFV (64 aa)) is the S5 DRBM domain.

The protein belongs to the universal ribosomal protein uS5 family. As to quaternary structure, part of the 30S ribosomal subunit. Contacts proteins S4 and S8.

Functionally, with S4 and S12 plays an important role in translational accuracy. In terms of biological role, located at the back of the 30S subunit body where it stabilizes the conformation of the head with respect to the body. This is Small ribosomal subunit protein uS5 from Allorhizobium ampelinum (strain ATCC BAA-846 / DSM 112012 / S4) (Agrobacterium vitis (strain S4)).